We begin with the raw amino-acid sequence, 268 residues long: Peptide transport system ATP-binding protein SapF (268 aa).

One can recognise an ABC transporter domain in the interval 6–251 (LEVRNLSKTF…PLHELTRRLI (246 aa)). Residue 47-54 (GENGSGKS) participates in ATP binding.

The protein belongs to the ABC transporter superfamily.

It is found in the cell inner membrane. In terms of biological role, involved in a peptide intake transport system that plays a role in the resistance to antimicrobial peptides. This chain is Peptide transport system ATP-binding protein SapF, found in Salmonella typhimurium (strain LT2 / SGSC1412 / ATCC 700720).